Reading from the N-terminus, the 37-residue chain is Large ribosomal subunit protein bL36 (37 aa).

The protein belongs to the bacterial ribosomal protein bL36 family.

This Ureaplasma parvum serovar 3 (strain ATCC 27815 / 27 / NCTC 11736) protein is Large ribosomal subunit protein bL36.